We begin with the raw amino-acid sequence, 310 residues long: tRNA dimethylallyltransferase 2 (310 aa).

15–22 (GPTASGKT) is a binding site for ATP. 17-22 (TASGKT) provides a ligand contact to substrate. Residues 40 to 43 (DSMQ) are interaction with substrate tRNA.

It belongs to the IPP transferase family. Monomer. Requires Mg(2+) as cofactor.

It carries out the reaction adenosine(37) in tRNA + dimethylallyl diphosphate = N(6)-dimethylallyladenosine(37) in tRNA + diphosphate. Functionally, catalyzes the transfer of a dimethylallyl group onto the adenine at position 37 in tRNAs that read codons beginning with uridine, leading to the formation of N6-(dimethylallyl)adenosine (i(6)A). The protein is tRNA dimethylallyltransferase 2 of Geotalea uraniireducens (strain Rf4) (Geobacter uraniireducens).